The sequence spans 155 residues: Small ribosomal subunit protein uS7c (155 aa).

It belongs to the universal ribosomal protein uS7 family. As to quaternary structure, part of the 30S ribosomal subunit.

The protein localises to the plastid. It is found in the chloroplast. In terms of biological role, one of the primary rRNA binding proteins, it binds directly to 16S rRNA where it nucleates assembly of the head domain of the 30S subunit. This Typha angustifolia (Narrow leaf cattail) protein is Small ribosomal subunit protein uS7c (rps7).